The sequence spans 176 residues: SsrA-binding protein (176 aa).

The segment at 1 to 33 is disordered; it reads MTEAGAKKAAGKKSGKGKGKNAKKNQPNITPVA. A compositionally biased stretch (basic residues) spans 9–23; it reads AAGKKSGKGKGKNAK.

Belongs to the SmpB family.

The protein localises to the cytoplasm. Required for rescue of stalled ribosomes mediated by trans-translation. Binds to transfer-messenger RNA (tmRNA), required for stable association of tmRNA with ribosomes. tmRNA and SmpB together mimic tRNA shape, replacing the anticodon stem-loop with SmpB. tmRNA is encoded by the ssrA gene; the 2 termini fold to resemble tRNA(Ala) and it encodes a 'tag peptide', a short internal open reading frame. During trans-translation Ala-aminoacylated tmRNA acts like a tRNA, entering the A-site of stalled ribosomes, displacing the stalled mRNA. The ribosome then switches to translate the ORF on the tmRNA; the nascent peptide is terminated with the 'tag peptide' encoded by the tmRNA and targeted for degradation. The ribosome is freed to recommence translation, which seems to be the essential function of trans-translation. The sequence is that of SsrA-binding protein from Rhodopirellula baltica (strain DSM 10527 / NCIMB 13988 / SH1).